Here is a 239-residue protein sequence, read N- to C-terminus: Probable transcriptional regulatory protein Pnuc_0618 (239 aa).

The disordered stretch occupies residues 1–21 (MAGHSKWANIQHRKGRQDEKR).

It belongs to the TACO1 family.

The protein resides in the cytoplasm. This is Probable transcriptional regulatory protein Pnuc_0618 from Polynucleobacter asymbioticus (strain DSM 18221 / CIP 109841 / QLW-P1DMWA-1) (Polynucleobacter necessarius subsp. asymbioticus).